We begin with the raw amino-acid sequence, 50 residues long: MARYRCCRSQSRSRCYRQRRSRRRKRQSCQTQRRAMRCCRRRSRLRRRRH.

The protein belongs to the protamine P1 family. In terms of assembly, cross-linked by interchain disulfide bonds around the DNA-helix. In terms of tissue distribution, testis.

It is found in the nucleus. Its subcellular location is the chromosome. Its function is as follows. Protamines substitute for histones in the chromatin of sperm during the haploid phase of spermatogenesis. They compact sperm DNA into a highly condensed, stable and inactive complex. The sequence is that of Sperm protamine P1 (PRM1) from Pan paniscus (Pygmy chimpanzee).